We begin with the raw amino-acid sequence, 477 residues long: Aspartyl/glutamyl-tRNA(Asn/Gln) amidotransferase subunit B (477 aa).

Belongs to the GatB/GatE family. GatB subfamily. As to quaternary structure, heterotrimer of A, B and C subunits.

The catalysed reaction is L-glutamyl-tRNA(Gln) + L-glutamine + ATP + H2O = L-glutaminyl-tRNA(Gln) + L-glutamate + ADP + phosphate + H(+). It catalyses the reaction L-aspartyl-tRNA(Asn) + L-glutamine + ATP + H2O = L-asparaginyl-tRNA(Asn) + L-glutamate + ADP + phosphate + 2 H(+). Its function is as follows. Allows the formation of correctly charged Asn-tRNA(Asn) or Gln-tRNA(Gln) through the transamidation of misacylated Asp-tRNA(Asn) or Glu-tRNA(Gln) in organisms which lack either or both of asparaginyl-tRNA or glutaminyl-tRNA synthetases. The reaction takes place in the presence of glutamine and ATP through an activated phospho-Asp-tRNA(Asn) or phospho-Glu-tRNA(Gln). In Coxiella burnetii (strain RSA 493 / Nine Mile phase I), this protein is Aspartyl/glutamyl-tRNA(Asn/Gln) amidotransferase subunit B.